The sequence spans 210 residues: Glutathione S-transferase P (210 aa).

Positions 2 to 81 constitute a GST N-terminal domain; the sequence is PPYTIVYFPV…HLGRSLGLYG (80 aa). The residue at position 4 (Y4) is a Phosphotyrosine; by EGFR. Glutathione-binding positions include Y8, R14, W39, K45, and 52-53; that span reads QL. Position 62 is a phosphothreonine (T62). Residue 65 to 66 participates in glutathione binding; it reads QS. The GST C-terminal domain occupies 83–204; sequence DQKEAALVDM…SSPDHLNRPI (122 aa). Residues K103 and K116 each carry the N6-succinyllysine modification. An N6-acetyllysine modification is found at K128.

It belongs to the GST superfamily. Pi family. In terms of assembly, homodimer. Interacts with CDK5. Present in kidney, lung, testis and placenta, very low levels in liver.

It is found in the cytoplasm. The protein resides in the mitochondrion. It localises to the nucleus. It carries out the reaction RX + glutathione = an S-substituted glutathione + a halide anion + H(+). It catalyses the reaction prostaglandin J2 + glutathione = prostaglandin J2-S-(R)-glutathione. The enzyme catalyses prostaglandin J2 + glutathione = prostaglandin J2-S-(S)-glutathione. The catalysed reaction is prostaglandin A2 + glutathione = prostaglandin A2-S-(S)-glutathione. It carries out the reaction 11(S)-hydroxy-14(S),15(S)-epoxy-(5Z,8Z,12E)-eicosatrienoate + glutathione = (11S,15S)-dihydroxy-14(R)-S-glutathionyl-(5Z,8Z,12E)-eicosatrienoate. Functionally, conjugation of reduced glutathione to a wide number of exogenous and endogenous hydrophobic electrophiles. Involved in the formation of glutathione conjugates of both prostaglandin A2 (PGA2) and prostaglandin J2 (PGJ2). Participates in the formation of novel hepoxilin regioisomers. Negatively regulates CDK5 activity via p25/p35 translocation to prevent neurodegeneration. The sequence is that of Glutathione S-transferase P from Rattus norvegicus (Rat).